The chain runs to 975 residues: Translation initiation factor IF-2 (975 aa).

The span at 48 to 63 shows a compositional bias: basic and acidic residues; that stretch reads DHLRKSHGATDGDKRK. 2 disordered regions span residues 48–84 and 98–388; these read DHLRKSHGATDGDKRKITLTRRHTSEIKQADATGKAR and KRDD…QAPT. Positions 104–115 are enriched in low complexity; sequence ETGADQAQAQTD. Over residues 120-177 the composition is skewed to basic and acidic residues; the sequence is AELKRREEEARREAELLEKQAQELRERQERLEREEAERRAREEAAEAERRRAEEEAAA. Over residues 178–211 the composition is skewed to low complexity; the sequence is KRAAAAQAEAAQQAAAAREQAQRAQSEPAEQSAQ. The segment covering 212-263 has biased composition (basic and acidic residues); that stretch reads DEARAAAERAAQREAAKKAEDAAREAADKARAEQEEIRKRREAAEAEARAIR. Positions 302-330 are enriched in low complexity; it reads KPAGEAAAARPAAKKPASGAPAPAAAPAG. Gly residues predominate over residues 359–372; that stretch reads SSGGVDRGWRGGPK. The 170-residue stretch at 475-644 folds into the tr-type G domain; that stretch reads PRPPVVTVMG…LLQAEVLELK (170 aa). A G1 region spans residues 484–491; the sequence is GHVDHGKT. Position 484–491 (484–491) interacts with GTP; the sequence is GHVDHGKT. The G2 stretch occupies residues 509 to 513; sequence GITQH. Residues 530–533 form a G3 region; that stretch reads DTPG. Residues 530–534 and 584–587 each bind GTP; these read DTPGH and NKID. Positions 584 to 587 are G4; the sequence is NKID. Residues 620 to 622 form a G5 region; that stretch reads SAK.

Belongs to the TRAFAC class translation factor GTPase superfamily. Classic translation factor GTPase family. IF-2 subfamily.

The protein resides in the cytoplasm. Its function is as follows. One of the essential components for the initiation of protein synthesis. Protects formylmethionyl-tRNA from spontaneous hydrolysis and promotes its binding to the 30S ribosomal subunits. Also involved in the hydrolysis of GTP during the formation of the 70S ribosomal complex. In Burkholderia mallei (strain NCTC 10247), this protein is Translation initiation factor IF-2.